The chain runs to 266 residues: MRLIPLKSASQVGLWSARYIVDRINGFKPTAERPFVLGLPTGGTPLNTYKRLIELHKAGEVSFQNVVTFNMDEYVGLPEDHPESYHSFMHNNFFSHIDIRPENINILNGNAPDLVAECKRYEDKIKSYGKIHLFMGGVGNDGHIAFNEPASSLSSRTRVKTLTEDTRIANSRFFGGDMEQVPKLALTVGVGTLMDAEEIMILVTGHGKAQALQAAVEGSVNHMWTISTLQLHPKGMMVCDEPSTMELKVKTVRYFQQLEAANIGRL.

Asp72 serves as the catalytic Proton acceptor; for enolization step. Asp141 functions as the For ring-opening step in the catalytic mechanism. The active-site Proton acceptor; for ring-opening step is the His143. Glu148 serves as the catalytic For ring-opening step.

Belongs to the glucosamine/galactosamine-6-phosphate isomerase family. NagB subfamily. Homohexamer.

It catalyses the reaction alpha-D-glucosamine 6-phosphate + H2O = beta-D-fructose 6-phosphate + NH4(+). Its pathway is amino-sugar metabolism; N-acetylneuraminate degradation; D-fructose 6-phosphate from N-acetylneuraminate: step 5/5. Allosterically activated by N-acetylglucosamine 6-phosphate (GlcNAc6P). Functionally, catalyzes the reversible isomerization-deamination of glucosamine 6-phosphate (GlcN6P) to form fructose 6-phosphate (Fru6P) and ammonium ion. The polypeptide is Glucosamine-6-phosphate deaminase (Aeromonas hydrophila subsp. hydrophila (strain ATCC 7966 / DSM 30187 / BCRC 13018 / CCUG 14551 / JCM 1027 / KCTC 2358 / NCIMB 9240 / NCTC 8049)).